We begin with the raw amino-acid sequence, 249 residues long: Globin-like protein 9 (249 aa).

The tract at residues 20 to 43 (TNKGPNGLARRGTQRGCSRSKSTR) is disordered. The 154-residue stretch at 52–205 (SLTFSQKQAL…LIDELRGGFE (154 aa)) folds into the Globin domain. Residues His116 and His148 each coordinate heme.

Belongs to the globin family.

The sequence is that of Globin-like protein 9 (glb-9) from Caenorhabditis elegans.